A 710-amino-acid polypeptide reads, in one-letter code: Polyribonucleotide nucleotidyltransferase (710 aa).

The Mg(2+) site is built by D491 and D497. Positions 558–618 (PRIYKIQVKP…SAAQKAIEII (61 aa)) constitute a KH domain. In terms of domain architecture, S1 motif spans 628 to 696 (GRIYMGKVTR…ELGRVRLSRK (69 aa)).

The protein belongs to the polyribonucleotide nucleotidyltransferase family. Mg(2+) serves as cofactor.

The protein resides in the cytoplasm. The enzyme catalyses RNA(n+1) + phosphate = RNA(n) + a ribonucleoside 5'-diphosphate. Involved in mRNA degradation. Catalyzes the phosphorolysis of single-stranded polyribonucleotides processively in the 3'- to 5'-direction. The chain is Polyribonucleotide nucleotidyltransferase from Thermodesulfovibrio yellowstonii (strain ATCC 51303 / DSM 11347 / YP87).